A 314-amino-acid chain; its full sequence is Methionyl-tRNA formyltransferase (314 aa).

Residue 113 to 116 (SLLP) participates in (6S)-5,6,7,8-tetrahydrofolate binding.

The protein belongs to the Fmt family.

It carries out the reaction L-methionyl-tRNA(fMet) + (6R)-10-formyltetrahydrofolate = N-formyl-L-methionyl-tRNA(fMet) + (6S)-5,6,7,8-tetrahydrofolate + H(+). Its function is as follows. Attaches a formyl group to the free amino group of methionyl-tRNA(fMet). The formyl group appears to play a dual role in the initiator identity of N-formylmethionyl-tRNA by promoting its recognition by IF2 and preventing the misappropriation of this tRNA by the elongation apparatus. In Pseudomonas savastanoi pv. phaseolicola (strain 1448A / Race 6) (Pseudomonas syringae pv. phaseolicola (strain 1448A / Race 6)), this protein is Methionyl-tRNA formyltransferase.